The sequence spans 133 residues: NADH dehydrogenase [ubiquinone] 1 alpha subcomplex subunit 6 (133 aa).

The protein belongs to the complex I LYR family. As to quaternary structure, complex I is composed of at least 49 different subunits.

The protein resides in the mitochondrion inner membrane. Functionally, accessory subunit of the mitochondrial membrane respiratory chain NADH dehydrogenase (Complex I), that is believed to be not involved in catalysis. Complex I functions in the transfer of electrons from NADH to the respiratory chain. The immediate electron acceptor for the enzyme is believed to be ubiquinone. The polypeptide is NADH dehydrogenase [ubiquinone] 1 alpha subcomplex subunit 6 (Arabidopsis thaliana (Mouse-ear cress)).